Here is a 256-residue protein sequence, read N- to C-terminus: Small ribosomal subunit protein eS1A (256 aa).

An N-acetylalanine; partial modification is found at A2.

Belongs to the eukaryotic ribosomal protein eS1 family. Component of the small ribosomal subunit. Mature ribosomes consist of a small (40S) and a large (60S) subunit. The 40S subunit contains about 33 different proteins and 1 molecule of RNA (18S). The 60S subunit contains about 49 different proteins and 3 molecules of RNA (25S, 5.8S and 5S).

It localises to the cytoplasm. The polypeptide is Small ribosomal subunit protein eS1A (Clavispora lusitaniae (strain ATCC 42720) (Yeast)).